Consider the following 328-residue polypeptide: Phosphate acetyltransferase (328 aa).

The protein belongs to the phosphate acetyltransferase and butyryltransferase family.

The protein resides in the cytoplasm. The catalysed reaction is acetyl-CoA + phosphate = acetyl phosphate + CoA. The protein operates within metabolic intermediate biosynthesis; acetyl-CoA biosynthesis; acetyl-CoA from acetate: step 2/2. This chain is Phosphate acetyltransferase (pta), found in Staphylococcus aureus (strain MRSA252).